Reading from the N-terminus, the 348-residue chain is S-adenosylmethionine:tRNA ribosyltransferase-isomerase (348 aa).

The protein belongs to the QueA family. Monomer.

The protein localises to the cytoplasm. It catalyses the reaction 7-aminomethyl-7-carbaguanosine(34) in tRNA + S-adenosyl-L-methionine = epoxyqueuosine(34) in tRNA + adenine + L-methionine + 2 H(+). It functions in the pathway tRNA modification; tRNA-queuosine biosynthesis. Transfers and isomerizes the ribose moiety from AdoMet to the 7-aminomethyl group of 7-deazaguanine (preQ1-tRNA) to give epoxyqueuosine (oQ-tRNA). This Cytophaga hutchinsonii (strain ATCC 33406 / DSM 1761 / CIP 103989 / NBRC 15051 / NCIMB 9469 / D465) protein is S-adenosylmethionine:tRNA ribosyltransferase-isomerase.